Consider the following 340-residue polypeptide: L-threonine 3-dehydrogenase (340 aa).

Cysteine 38 is a binding site for Zn(2+). Active-site charge relay system residues include threonine 40 and histidine 43. Zn(2+)-binding residues include histidine 63, glutamate 64, cysteine 93, cysteine 96, cysteine 99, and cysteine 107. Residues isoleucine 175, aspartate 195, arginine 200, 262 to 264 (LGI), and 286 to 287 (IY) each bind NAD(+).

The protein belongs to the zinc-containing alcohol dehydrogenase family. Homotetramer. It depends on Zn(2+) as a cofactor.

It localises to the cytoplasm. It carries out the reaction L-threonine + NAD(+) = (2S)-2-amino-3-oxobutanoate + NADH + H(+). Its pathway is amino-acid degradation; L-threonine degradation via oxydo-reductase pathway; glycine from L-threonine: step 1/2. Its function is as follows. Catalyzes the NAD(+)-dependent oxidation of L-threonine to 2-amino-3-ketobutyrate. The protein is L-threonine 3-dehydrogenase of Legionella pneumophila (strain Corby).